Here is a 255-residue protein sequence, read N- to C-terminus: Imidazole glycerol phosphate synthase subunit HisF (255 aa).

Residues Asp11 and Asp130 contribute to the active site.

It belongs to the HisA/HisF family. Heterodimer of HisH and HisF.

The protein resides in the cytoplasm. The catalysed reaction is 5-[(5-phospho-1-deoxy-D-ribulos-1-ylimino)methylamino]-1-(5-phospho-beta-D-ribosyl)imidazole-4-carboxamide + L-glutamine = D-erythro-1-(imidazol-4-yl)glycerol 3-phosphate + 5-amino-1-(5-phospho-beta-D-ribosyl)imidazole-4-carboxamide + L-glutamate + H(+). It participates in amino-acid biosynthesis; L-histidine biosynthesis; L-histidine from 5-phospho-alpha-D-ribose 1-diphosphate: step 5/9. Functionally, IGPS catalyzes the conversion of PRFAR and glutamine to IGP, AICAR and glutamate. The HisF subunit catalyzes the cyclization activity that produces IGP and AICAR from PRFAR using the ammonia provided by the HisH subunit. This Campylobacter jejuni (strain RM1221) protein is Imidazole glycerol phosphate synthase subunit HisF.